Consider the following 100-residue polypeptide: Large ribosomal subunit protein uL23 (100 aa).

Belongs to the universal ribosomal protein uL23 family. In terms of assembly, part of the 50S ribosomal subunit. Contacts protein L29, and trigger factor when it is bound to the ribosome.

In terms of biological role, one of the early assembly proteins it binds 23S rRNA. One of the proteins that surrounds the polypeptide exit tunnel on the outside of the ribosome. Forms the main docking site for trigger factor binding to the ribosome. This chain is Large ribosomal subunit protein uL23, found in Pseudoalteromonas atlantica (strain T6c / ATCC BAA-1087).